A 417-amino-acid chain; its full sequence is uncharacterized protein (417 aa).

The protein belongs to the MG032/MG096/MG288 family.

This is an uncharacterized protein from Mycoplasma pneumoniae (strain ATCC 29342 / M129 / Subtype 1) (Mycoplasmoides pneumoniae).